The sequence spans 225 residues: Cytidylate kinase (225 aa).

Residue 11–19 (GPAAAGKST) coordinates ATP.

It belongs to the cytidylate kinase family. Type 1 subfamily.

Its subcellular location is the cytoplasm. The enzyme catalyses CMP + ATP = CDP + ADP. It catalyses the reaction dCMP + ATP = dCDP + ADP. This chain is Cytidylate kinase, found in Anoxybacillus flavithermus (strain DSM 21510 / WK1).